A 255-amino-acid chain; its full sequence is BTB/POZ domain-containing protein kctd15 (255 aa).

One can recognise a BTB domain in the interval 30 to 100; sequence APVHIDVGGH…LRTSKLLLPE (71 aa).

Forms oligomers, predominantly homopentamers. Interacts with TFAP2A; this interaction inhibits TFAP2A transcriptional activation.

Its subcellular location is the nucleus. Functionally, during embryonic development, interferes with neural crest formation. Inhibits AP2 transcriptional activity by interaction with its activation domain. This is BTB/POZ domain-containing protein kctd15 (kctd15) from Xenopus tropicalis (Western clawed frog).